The primary structure comprises 108 residues: uncharacterized protein (108 aa).

This is an uncharacterized protein from Pasteurella multocida (strain Pm70).